Reading from the N-terminus, the 430-residue chain is Serine--tRNA ligase (430 aa).

L-serine is bound at residue 237–239 (TAE). ATP is bound at residue 268 to 270 (RSE). Glu291 is a binding site for L-serine. 355 to 358 (EISS) serves as a coordination point for ATP. L-serine is bound at residue Ser391.

Belongs to the class-II aminoacyl-tRNA synthetase family. Type-1 seryl-tRNA synthetase subfamily. As to quaternary structure, homodimer. The tRNA molecule binds across the dimer.

Its subcellular location is the cytoplasm. It carries out the reaction tRNA(Ser) + L-serine + ATP = L-seryl-tRNA(Ser) + AMP + diphosphate + H(+). The enzyme catalyses tRNA(Sec) + L-serine + ATP = L-seryl-tRNA(Sec) + AMP + diphosphate + H(+). Its pathway is aminoacyl-tRNA biosynthesis; selenocysteinyl-tRNA(Sec) biosynthesis; L-seryl-tRNA(Sec) from L-serine and tRNA(Sec): step 1/1. Its function is as follows. Catalyzes the attachment of serine to tRNA(Ser). Is also able to aminoacylate tRNA(Sec) with serine, to form the misacylated tRNA L-seryl-tRNA(Sec), which will be further converted into selenocysteinyl-tRNA(Sec). The sequence is that of Serine--tRNA ligase from Escherichia fergusonii (strain ATCC 35469 / DSM 13698 / CCUG 18766 / IAM 14443 / JCM 21226 / LMG 7866 / NBRC 102419 / NCTC 12128 / CDC 0568-73).